Consider the following 137-residue polypeptide: MKKLIYIIVGIAGILGALSRYYLGLTIHEFWHHTFPLATLLINLAGCFLLAWLTTYIAKRNLLPSDVITGIGTGFIGSFTTFSTFSVETVQLINYSEWSIAFLYVSCSILGGLIMSGLGYTLGDFLLKKHLTEGDHL.

4 helical membrane-spanning segments follow: residues 4–24 (LIYI…YYLG), 37–57 (LATL…TTYI), 67–87 (VITG…TFSV), and 100–120 (IAFL…GLGY). Gly77 and Thr80 together coordinate Na(+).

It belongs to the fluoride channel Fluc/FEX (TC 1.A.43) family.

The protein resides in the cell membrane. The catalysed reaction is fluoride(in) = fluoride(out). Na(+) is not transported, but it plays an essential structural role and its presence is essential for fluoride channel function. Its function is as follows. Fluoride-specific ion channel. Important for reducing fluoride concentration in the cell, thus reducing its toxicity. This Bacillus thuringiensis subsp. konkukian (strain 97-27) protein is Fluoride-specific ion channel FluC 1.